Reading from the N-terminus, the 115-residue chain is Pre-histone-like nucleoprotein (115 aa).

A propeptide spanning residues 2-23 is cleaved from the precursor; the sequence is PILISPSDNTGWGLGKLRIRAT. Residues 85 to 99 are compositionally biased toward basic residues; the sequence is GRRTARSARRRSARK. The interval 85-115 is disordered; that stretch reads GRRTARSARRRSARKSRSEKTGPRIRYTRRI. The Nuclear localization signal signature appears at 114–115; the sequence is RI.

Belongs to the adenoviridae histone-like nucleoprotein family. In terms of assembly, interacts with the core-capsid bridging protein; this interaction bridges the virus core to the capsid. Interacts with host NPM1; this interaction might play a role in placing the pre-histone-like nucleoprotein on the viral DNA or regulating viral gene expression. Interacts with host HMGB1; this interaction inhibits host immune response. Cleaved near the N-terminus by the viral protease during virion maturation to form the mature protein.

It localises to the virion. The protein localises to the host nucleus. The protein resides in the host nucleolus. Plays a role in the inhibition of host immune response within the nucleus. Interacts with cellular nucleosomes and immobilizes the host immune danger signal HMGB1 on chromatin. In turn, prevents HMGB1 release out of the cell and thus decreases inflammation. Also plays a role in the wrapping and condensation of the viral DNA. May also promote viral genome import into the nucleus. The sequence is that of Pre-histone-like nucleoprotein from Pantherophis guttatus (Corn snake).